Here is a 104-residue protein sequence, read N- to C-terminus: Guanidinium exporter (104 aa).

Position 1 (Met-1) is a topological domain, cytoplasmic. Residues 2–19 form a helical membrane-spanning segment; sequence AWIILVIAGLLEVIWAIG. Residues 20 to 28 are Periplasmic-facing; that stretch reads LKYSHGFSR. A helical transmembrane segment spans residues 29–48; that stretch reads LTPSIITLVAMAASVFLLAY. Residues 49–54 are Cytoplasmic-facing; that stretch reads AMKSLP. The helical transmembrane segment at 55 to 77 threads the bilayer; that stretch reads AGTAYAVWTGIGAVGTAILGIVL. At 78–81 the chain is on the periplasmic side; sequence LGES. The helical transmembrane segment at 82 to 100 threads the bilayer; the sequence is ASLARILSLGLILAGIIGL. The Cytoplasmic segment spans residues 101–104; sequence KLAS.

The protein belongs to the drug/metabolite transporter (DMT) superfamily. Small multidrug resistance (SMR) (TC 2.A.7.1) family. Gdx/SugE subfamily.

Its subcellular location is the cell inner membrane. In terms of biological role, guanidinium ion exporter. Couples guanidinium export to the proton motive force, exchanging one guanidinium ion for two protons. The protein is Guanidinium exporter of Yersinia pestis.